Reading from the N-terminus, the 137-residue chain is Holo-[acyl-carrier-protein] synthase (137 aa).

Mg(2+)-binding residues include D8 and E57.

It belongs to the P-Pant transferase superfamily. AcpS family. Mg(2+) is required as a cofactor.

It is found in the cytoplasm. It catalyses the reaction apo-[ACP] + CoA = holo-[ACP] + adenosine 3',5'-bisphosphate + H(+). Transfers the 4'-phosphopantetheine moiety from coenzyme A to a Ser of acyl-carrier-protein. In Cereibacter sphaeroides (strain ATCC 17025 / ATH 2.4.3) (Rhodobacter sphaeroides), this protein is Holo-[acyl-carrier-protein] synthase.